Reading from the N-terminus, the 878-residue chain is Alanine--tRNA ligase (878 aa).

4 residues coordinate Zn(2+): His564, His568, Cys665, and His669.

Belongs to the class-II aminoacyl-tRNA synthetase family. The cofactor is Zn(2+).

It is found in the cytoplasm. It carries out the reaction tRNA(Ala) + L-alanine + ATP = L-alanyl-tRNA(Ala) + AMP + diphosphate. In terms of biological role, catalyzes the attachment of alanine to tRNA(Ala) in a two-step reaction: alanine is first activated by ATP to form Ala-AMP and then transferred to the acceptor end of tRNA(Ala). Also edits incorrectly charged Ser-tRNA(Ala) and Gly-tRNA(Ala) via its editing domain. In Natranaerobius thermophilus (strain ATCC BAA-1301 / DSM 18059 / JW/NM-WN-LF), this protein is Alanine--tRNA ligase.